Consider the following 1372-residue polypeptide: DNA-directed RNA polymerase subunit beta' (1372 aa).

The Zn(2+) site is built by Cys-69, Cys-71, Cys-84, and Cys-87. Residues Asp-460, Asp-462, and Asp-464 each contribute to the Mg(2+) site. Zn(2+) is bound by residues Cys-808, Cys-882, Cys-889, and Cys-892.

It belongs to the RNA polymerase beta' chain family. In terms of assembly, the RNAP catalytic core consists of 2 alpha, 1 beta, 1 beta' and 1 omega subunit. When a sigma factor is associated with the core the holoenzyme is formed, which can initiate transcription. It depends on Mg(2+) as a cofactor. The cofactor is Zn(2+).

It carries out the reaction RNA(n) + a ribonucleoside 5'-triphosphate = RNA(n+1) + diphosphate. Functionally, DNA-dependent RNA polymerase catalyzes the transcription of DNA into RNA using the four ribonucleoside triphosphates as substrates. This is DNA-directed RNA polymerase subunit beta' from Rickettsia rickettsii (strain Iowa).